The chain runs to 467 residues: Ergochrome gene cluster transcriptional coactivator CPUR_05432 (467 aa).

In terms of domain architecture, HTH iclR-type spans 109-179 (IAIQCEMLGS…RRGYVAHTPL (71 aa)). Positions 139–158 (IQDVANLSNVPEQQLAQMIG) form a DNA-binding region, H-T-H motif.

The protein resides in the nucleus. Functionally, transcriptional coactivator; part of the gene cluster responsible for the typical purple-black color of the ergot sclerotia. The ergochrome gene cluster produces several ergot pigments including the yellow ergochrome secalonic acid and its derivatives, as well as the red anthraquinones endocrocin and clavorubin. With CPUR_05433, coregulates the production of geodin. The polypeptide is Ergochrome gene cluster transcriptional coactivator CPUR_05432 (Claviceps purpurea (strain 20.1) (Ergot fungus)).